A 265-amino-acid chain; its full sequence is Orotidine 5'-phosphate decarboxylase (265 aa).

Residues D37, 59–61, 91–100, Y217, and R235 contribute to the substrate site; these read KTH and DRKFADIGNT. K93 serves as the catalytic Proton donor.

This sequence belongs to the OMP decarboxylase family.

The enzyme catalyses orotidine 5'-phosphate + H(+) = UMP + CO2. It participates in pyrimidine metabolism; UMP biosynthesis via de novo pathway; UMP from orotate: step 2/2. This Diutina rugosa (Yeast) protein is Orotidine 5'-phosphate decarboxylase (URA3).